The following is a 300-amino-acid chain: Coatomer subunit epsilon (300 aa).

The protein belongs to the COPE family. As to quaternary structure, oligomeric complex that consists of at least the alpha, beta, beta', gamma, delta, epsilon and zeta subunits.

It localises to the cytoplasm. It is found in the golgi apparatus membrane. The protein resides in the cytoplasmic vesicle. Its subcellular location is the COPI-coated vesicle membrane. Its function is as follows. The coatomer is a cytosolic protein complex that binds to dilysine motifs and reversibly associates with Golgi non-clathrin-coated vesicles, which further mediate biosynthetic protein transport from the ER, via the Golgi up to the trans Golgi network. The coatomer complex is required for budding from Golgi membranes, and is essential for the retrograde Golgi-to-ER transport of dilysine-tagged proteins. In Dictyostelium discoideum (Social amoeba), this protein is Coatomer subunit epsilon (cope).